The sequence spans 348 residues: Dihydroorotase (348 aa).

Positions 14 and 16 each coordinate Zn(2+). Residues 16 to 18 (HLR) and N42 each bind substrate. Positions 100, 137, and 175 each coordinate Zn(2+). K100 bears the N6-carboxylysine mark. A substrate-binding site is contributed by H137. L220 contacts substrate. Residue D248 participates in Zn(2+) binding. Residue D248 is part of the active site. Substrate contacts are provided by H252 and A264.

The protein belongs to the metallo-dependent hydrolases superfamily. DHOase family. Class II DHOase subfamily. As to quaternary structure, homodimer. Zn(2+) is required as a cofactor.

It carries out the reaction (S)-dihydroorotate + H2O = N-carbamoyl-L-aspartate + H(+). The protein operates within pyrimidine metabolism; UMP biosynthesis via de novo pathway; (S)-dihydroorotate from bicarbonate: step 3/3. Functionally, catalyzes the reversible cyclization of carbamoyl aspartate to dihydroorotate. The chain is Dihydroorotase from Pseudomonas entomophila (strain L48).